The primary structure comprises 1026 residues: Phosphoenolpyruvate carboxylase (1026 aa).

Catalysis depends on residues histidine 199 and lysine 672.

It belongs to the PEPCase type 1 family. Mg(2+) serves as cofactor.

The enzyme catalyses oxaloacetate + phosphate = phosphoenolpyruvate + hydrogencarbonate. Functionally, forms oxaloacetate, a four-carbon dicarboxylic acid source for the tricarboxylic acid cycle. The chain is Phosphoenolpyruvate carboxylase (ppc) from Nostoc sp. (strain PCC 7120 / SAG 25.82 / UTEX 2576).